Consider the following 240-residue polypeptide: Small ribosomal subunit protein uS2c (240 aa).

Belongs to the universal ribosomal protein uS2 family.

The protein localises to the plastid. It localises to the chloroplast. This is Small ribosomal subunit protein uS2c (rps2) from Cycas taitungensis (Prince sago).